A 230-amino-acid polypeptide reads, in one-letter code: Cytidylate kinase (230 aa).

Residue 13–21 (GPAGTGKSS) participates in ATP binding.

The protein belongs to the cytidylate kinase family. Type 1 subfamily.

The protein localises to the cytoplasm. It carries out the reaction CMP + ATP = CDP + ADP. The enzyme catalyses dCMP + ATP = dCDP + ADP. This chain is Cytidylate kinase, found in Mycobacterium tuberculosis (strain ATCC 25177 / H37Ra).